The following is a 211-amino-acid chain: WAP four-disulfide core domain protein 1 (211 aa).

Residues 1–23 (MGNCGRKVLRALSFLLLLGSSSA) form the signal peptide. Positions 50–99 (RQPHADRCPPPPRTLPPGACQATRCQADSECPRHRRCCYNGCAYACLEAV) constitute a WAP domain. Intrachain disulfides connect cysteine 57–cysteine 87, cysteine 69–cysteine 91, cysteine 74–cysteine 86, and cysteine 80–cysteine 95. Over residues 182-198 (VLRQRLHKEYPEGDSKN) the composition is skewed to basic and acidic residues. Residues 182 to 211 (VLRQRLHKEYPEGDSKNVAEPGKGQQRHFP) are disordered.

It is found in the secreted. Functionally, has growth inhibitory activity. This is WAP four-disulfide core domain protein 1 (Wfdc1) from Mus musculus (Mouse).